We begin with the raw amino-acid sequence, 397 residues long: Elongation factor Tu (397 aa).

The tr-type G domain occupies 10-207 (KPHCNIGTIG…AVDEYIPQPE (198 aa)). Positions 19–26 (GHVDHGKT) are G1. 19–26 (GHVDHGKT) provides a ligand contact to GTP. Thr-26 contacts Mg(2+). Positions 61–65 (GITIS) are G2. Residues 82–85 (DCPG) are G3. GTP-binding positions include 82-86 (DCPGH) and 137-140 (NKVD). A G4 region spans residues 137–140 (NKVD). The tract at residues 175 to 177 (SAL) is G5.

It belongs to the TRAFAC class translation factor GTPase superfamily. Classic translation factor GTPase family. EF-Tu/EF-1A subfamily. In terms of assembly, monomer.

The protein localises to the cytoplasm. The catalysed reaction is GTP + H2O = GDP + phosphate + H(+). Its function is as follows. GTP hydrolase that promotes the GTP-dependent binding of aminoacyl-tRNA to the A-site of ribosomes during protein biosynthesis. This chain is Elongation factor Tu, found in Zymomonas mobilis subsp. mobilis (strain ATCC 31821 / ZM4 / CP4).